Reading from the N-terminus, the 673-residue chain is Kinesin-like protein KIFC1 (673 aa).

Phosphoserine occurs at positions 6, 26, 31, and 33. Disordered regions lie at residues 23–94 and 109–136; these read KAPS…TGPR and VPAV…KRPA. The span at 60-86 shows a compositional bias: polar residues; that stretch reads TKITTSHPRVPSLTTVPQTQGQTTAQK. Positions 142-306 form a coiled coil; the sequence is QLCDLNAELK…RRRLHNQLQE (165 aa). The 354-residue stretch at 310-663 folds into the Kinesin motor domain; the sequence is NIRVFCRVRP…LRFASKVNQC (354 aa). A disordered region spans residues 325 to 372; that stretch reads PTPPPGLLLFPSGPGGPSDPPTRLSLSRSDERRGTLSGAPAPPTRHDF. Thr359 carries the post-translational modification Phosphothreonine. 410 to 417 lines the ATP pocket; it reads GQTGSGKT.

This sequence belongs to the TRAFAC class myosin-kinesin ATPase superfamily. Kinesin family. NCD subfamily. Binds NUBP1 and NUBP2. Interacts with PPP1R42.

It localises to the nucleus. The protein resides in the cytoplasm. The protein localises to the cytoskeleton. It is found in the microtubule organizing center. Its subcellular location is the centrosome. It localises to the spindle. The protein resides in the early endosome. Functionally, minus end-directed microtubule-dependent motor required for bipolar spindle formation. May contribute to movement of early endocytic vesicles. Regulates cilium formation and structure. This chain is Kinesin-like protein KIFC1 (KIFC1), found in Homo sapiens (Human).